We begin with the raw amino-acid sequence, 217 residues long: U2 snRNP component ist3 (217 aa).

Residues 31 to 109 (AYIYIGNLDF…RLVRVDHVAS (79 aa)) enclose the RRM domain. Disordered stretches follow at residues 119-138 (PANL…STIN) and 154-217 (EVEQ…DLDG). The span at 128-138 (SGSSLSVSTIN) shows a compositional bias: polar residues. At Ser160 the chain carries Phosphoserine. Composition is skewed to basic and acidic residues over residues 161–176 (PKDE…DYIH) and 185–198 (HESS…DSNR). The span at 199 to 217 (HSRHHRRHSRSRRHRDLDG) shows a compositional bias: basic residues.

It belongs to the IST3 family. As to quaternary structure, belongs to the 40S cdc5-associated complex (or cwf complex), a spliceosome sub-complex reminiscent of a late-stage spliceosome composed of the U2, U5 and U6 snRNAs and at least brr2, cdc5, cwf2/prp3, cwf3/syf1, cwf4/syf3, cwf5/ecm2, spp42/cwf6, cwf7/spf27, cwf8, cwf9, cwf10, cwf11, cwf12, prp45/cwf13, cwf14, cwf15, cwf16, cwf17, cwf18, cwf19, cwf20, cwf21, cwf22, cwf23, cwf24, cwf25, cwf26, cyp7/cwf27, cwf28, cwf29/ist3, lea1, msl1, prp5/cwf1, prp10, prp12/sap130, prp17, prp22, sap61, sap62, sap114, sap145, slu7, smb1, smd1, smd3, smf1, smg1 and syf2.

The protein localises to the nucleus. Its function is as follows. Required for pre-mRNA splicing and spliceosome assembly. The protein is U2 snRNP component ist3 (cwf29) of Schizosaccharomyces pombe (strain 972 / ATCC 24843) (Fission yeast).